Reading from the N-terminus, the 517-residue chain is Putative lipase ATG15 (517 aa).

At 1-6 (MRASTH) the chain is on the cytoplasmic side. The chain crosses the membrane as a helical; Signal-anchor for type II membrane protein span at residues 7–27 (SWLLLVVVLSLSSFTVNAVIL). At 28 to 517 (EGLIPPRSHL…TNWHFTDETL (490 aa)) the chain is on the lumenal side. Asn-187, Asn-221, and Asn-303 each carry an N-linked (GlcNAc...) asparagine glycan. The Charge relay system role is filled by Ser-319. The tract at residues 466–499 (GWRWPWHRGDSADDDGDSDEDTDEDDKLAVPKAR) is disordered. The span at 477 to 491 (ADDDGDSDEDTDEDD) shows a compositional bias: acidic residues.

This sequence belongs to the AB hydrolase superfamily. Lipase family. As to quaternary structure, binds to both phosphatidylinositol (PI) and phosphatidylinositol 3,5-bisphosphate (PIP2).

The protein localises to the endosome. It is found in the multivesicular body membrane. The protein resides in the prevacuolar compartment membrane. It catalyses the reaction a triacylglycerol + H2O = a diacylglycerol + a fatty acid + H(+). Its function is as follows. Lipase which is essential for lysis of subvacuolar cytoplasm to vacuole targeted bodies and intravacuolar autophagic bodies. Involved in the lysis of intravacuolar multivesicular body (MVB) vesicles. The intravacuolar membrane disintegration by ATG15 is critical to life span extension. This is Putative lipase ATG15 (ATG15) from Mycosarcoma maydis (Corn smut fungus).